A 102-amino-acid chain; its full sequence is MKQNKIEVYGIPDEVGRCPGCQSVTKLLKELNAPFTFYKVLTNNGKIEYDRPLIVSLAKRAGFTSLNIRYPVIFINDSRQKNIKHFKETLISLGYDRDIIED.

This is an uncharacterized protein from Enterobacteria phage T4 (Bacteriophage T4).